The chain runs to 1787 residues: ATP-dependent RNA helicase DEAH11, chloroplastic (1787 aa).

A chloroplast-targeting transit peptide spans 1–33; sequence MRNSFPPSDGGRSTTDRRQQSFPSSSTNRYNSR. The interval 1-75 is disordered; the sequence is MRNSFPPSDG…DRAPSSGFSP (75 aa). Over residues 20-60 the composition is skewed to polar residues; that stretch reads QSFPSSSTNRYNSRSAQSSPPLNHCTTWNQQHSQYHNTNFP. A Helicase ATP-binding domain is found at 313-477; that stretch reads LKKIHCEQIM…LFDCGILHVN (165 aa). Position 326–333 (326–333) interacts with ATP; sequence GETGSGKS. Residues 424 to 427 carry the DEAH box motif; the sequence is DEAH. Residues 507–673 enclose the Helicase C-terminal domain; it reads DVVKMAVEIH…VALLRMLALG (167 aa). The tract at residues 1557–1764 is TRIAD supradomain; that stretch reads IELECPICLS…EPCYAHLRTI (208 aa). Positions 1561, 1564, 1577, 1579, 1582, 1585, 1604, 1609, 1649, 1654, 1672, 1675, 1680, 1683, 1688, 1693, 1719, and 1722 each coordinate Zn(2+). The RING-type 1 zinc-finger motif lies at 1561 to 1609; that stretch reads CPICLSEVDDGYSLEGCSHLFCKACLLEQFEASMRNFDAFPILCSHIDC. The IBR-type zinc finger occupies 1628–1693; the sequence is DELISASLSA…HLEYHPLITC (66 aa). Residues 1719 to 1747 form an RING-type 2; atypical zinc finger; that stretch reads CPICKSTIEKTDGCNHLQCRCGKHICWTC. Cys1732 is a catalytic residue. Cys1737 and Cys1739 together coordinate Zn(2+).

Belongs to the DEAD box helicase family. DEAH subfamily.

It is found in the plastid. The protein localises to the chloroplast. It carries out the reaction ATP + H2O = ADP + phosphate + H(+). The polypeptide is ATP-dependent RNA helicase DEAH11, chloroplastic (Arabidopsis thaliana (Mouse-ear cress)).